The chain runs to 695 residues: Follicle-stimulating hormone receptor (695 aa).

A signal peptide spans Met-1–Gly-17. 2 cysteine pairs are disulfide-bonded: Cys-18-Cys-25 and Cys-23-Cys-32. The 29-residue stretch at Cys-18 to Arg-46 folds into the LRRNT domain. At Cys-18–Arg-366 the chain is on the extracellular side. LRR repeat units lie at residues Val-49 to Leu-72, Glu-73 to Leu-97, His-98 to Asn-118, Leu-119 to Ser-143, Leu-144 to Ser-169, Phe-170 to Gly-192, Thr-193 to Gly-216, Ala-217 to Asn-240, and Ile-241 to Asp-259. N-linked (GlcNAc...) asparagine glycosylation is present at Asn-93. 2 N-linked (GlcNAc...) asparagine glycosylation sites follow: Asn-191 and Asn-199. 4 cysteine pairs are disulfide-bonded: Cys-275–Cys-346, Cys-276–Cys-292, Cys-276–Cys-356, and Cys-292–Cys-338. Asn-293 carries an N-linked (GlcNAc...) asparagine glycan. Tyr-335 bears the Sulfotyrosine mark. The helical transmembrane segment at Val-367–Leu-387 threads the bilayer. At Ile-388–Arg-398 the chain is on the cytoplasmic side. Residues Phe-399–Ala-419 traverse the membrane as a helical segment. At Ser-420–Ala-444 the chain is on the extracellular side. The chain crosses the membrane as a helical span at residues Ala-445–Leu-465. The Cytoplasmic portion of the chain corresponds to Glu-466–Ala-487. A helical transmembrane segment spans residues Ile-488 to Ile-508. Over Ser-509–Gln-528 the chain is Extracellular. A helical transmembrane segment spans residues Leu-529–Ala-550. Topologically, residues His-551 to Arg-573 are cytoplasmic. The chain crosses the membrane as a helical span at residues Met-574 to Ser-594. The Extracellular portion of the chain corresponds to Ala-595–Lys-608. Residues Ile-609–Phe-629 form a helical membrane-spanning segment. At Thr-630 to Asn-695 the chain is on the cytoplasmic side.

The protein belongs to the G-protein coupled receptor 1 family. FSH/LSH/TSH subfamily. As to quaternary structure, homotrimer. Functions as a homotrimer binding the FSH hormone heterodimer composed of CGA and FSHB. Interacts with ARRB2. Interacts with APPL2; interaction is independent of follicle stimulating hormone stimulation. In terms of processing, N-glycosylated; indirectly required for FSH-binding, possibly via a conformational change that allows high affinity binding of hormone. Sulfated.

The protein localises to the cell membrane. In terms of biological role, g protein-coupled receptor for follitropin, the follicle-stimulating hormone. Through cAMP production activates the downstream PI3K-AKT and ERK1/ERK2 signaling pathways. In Felis catus (Cat), this protein is Follicle-stimulating hormone receptor (FSHR).